A 176-amino-acid polypeptide reads, in one-letter code: Endothelin-2 (176 aa).

An N-terminal signal peptide occupies residues 1–22 (MVSPAWCSIALALLLALHEGKG). Positions 23–44 (QAAATMEQPASAPKGRGPHLRF) are excised as a propeptide. 2 disulfides stabilise this stretch: Cys47–Cys61 and Cys49–Cys57. A propeptide spanning residues 68-176 (VNTAGQTAPY…IPAHSRRRKR (109 aa)) is cleaved from the precursor. The interval 94 to 109 (CECSSAGDSACATFCH) is endothelin-like.

This sequence belongs to the endothelin/sarafotoxin family.

It localises to the secreted. Its function is as follows. Vasoconstrictor. In Rattus norvegicus (Rat), this protein is Endothelin-2 (Edn2).